A 176-amino-acid polypeptide reads, in one-letter code: Peptidoglycan-associated lipoprotein (176 aa).

Positions 1-21 (MKAGSFYKLGLLVASAVLVAA) are cleaved as a signal peptide. Residue Cys-22 is the site of N-palmitoyl cysteine attachment. A lipid anchor (S-diacylglycerol cysteine) is attached at Cys-22. The 117-residue stretch at 60–176 (YTTQAPHNQL…RVEFIYEATR (117 aa)) folds into the OmpA-like domain.

The protein belongs to the Pal lipoprotein family. The Tol-Pal system is composed of five core proteins: the inner membrane proteins TolA, TolQ and TolR, the periplasmic protein TolB and the outer membrane protein Pal. They form a network linking the inner and outer membranes and the peptidoglycan layer.

It localises to the cell outer membrane. Part of the Tol-Pal system, which plays a role in outer membrane invagination during cell division and is important for maintaining outer membrane integrity. Very strongly associated with the peptidoglycan. This is Peptidoglycan-associated lipoprotein from Legionella pneumophila.